Here is a 105-residue protein sequence, read N- to C-terminus: Large ribosomal subunit protein bL21c (105 aa).

Belongs to the bacterial ribosomal protein bL21 family. In terms of assembly, part of the 50S ribosomal subunit.

It is found in the plastid. It localises to the chloroplast. This protein binds to 23S rRNA. In Thalassiosira pseudonana (Marine diatom), this protein is Large ribosomal subunit protein bL21c.